The following is a 133-amino-acid chain: Small ribosomal subunit protein uS8 (133 aa).

The protein belongs to the universal ribosomal protein uS8 family. In terms of assembly, part of the 30S ribosomal subunit.

Its function is as follows. One of the primary rRNA binding proteins, it binds directly to 16S rRNA central domain where it helps coordinate assembly of the platform of the 30S subunit. This chain is Small ribosomal subunit protein uS8, found in Saccharolobus solfataricus (strain ATCC 35092 / DSM 1617 / JCM 11322 / P2) (Sulfolobus solfataricus).